The primary structure comprises 605 residues: Bifunctional purine biosynthesis protein ADE16 (605 aa).

One can recognise an MGS-like domain in the interval 1 to 147; it reads MSSEAPIALL…KNHGRVSIIS (147 aa). Residues 35 to 38, 65 to 68, 102 to 103, and 126 to 127 each bind IMP; these read SGGT, RVKT, CN, and DI. Residue lysine 138 is the Proton donor/acceptor; for FAICAR cyclization activity of the active site. 5-amino-1-(5-phospho-beta-D-ribosyl)imidazole-4-carboxamide-binding positions include 219–220, histidine 279, glycine 327, aspartate 350, asparagine 442, and arginine 462; that span reads RY. Histidine 279 serves as the catalytic Proton acceptor; for AICAR formyltransferase activity. Residue isoleucine 463 coordinates (6R)-10-formyltetrahydrofolate. Phenylalanine 554 provides a ligand contact to 5-amino-1-(5-phospho-beta-D-ribosyl)imidazole-4-carboxamide. Residue aspartate 559 participates in (6R)-10-formyltetrahydrofolate binding. Arginine 601 is a binding site for 5-amino-1-(5-phospho-beta-D-ribosyl)imidazole-4-carboxamide.

This sequence belongs to the PurH family. Homodimer.

Its subcellular location is the cytoplasm. The protein localises to the cytosol. The enzyme catalyses (6R)-10-formyltetrahydrofolate + 5-amino-1-(5-phospho-beta-D-ribosyl)imidazole-4-carboxamide = 5-formamido-1-(5-phospho-D-ribosyl)imidazole-4-carboxamide + (6S)-5,6,7,8-tetrahydrofolate. It catalyses the reaction IMP + H2O = 5-formamido-1-(5-phospho-D-ribosyl)imidazole-4-carboxamide. It functions in the pathway purine metabolism; IMP biosynthesis via de novo pathway; 5-formamido-1-(5-phospho-D-ribosyl)imidazole-4-carboxamide from 5-amino-1-(5-phospho-D-ribosyl)imidazole-4-carboxamide (10-formyl THF route): step 1/1. Its pathway is purine metabolism; IMP biosynthesis via de novo pathway; IMP from 5-formamido-1-(5-phospho-D-ribosyl)imidazole-4-carboxamide: step 1/1. Its function is as follows. Bifunctional enzyme that catalyzes the last two steps of purine biosynthesis. Acts as a transformylase that incorporates a formyl group to the AMP analog AICAR (5-amino-1-(5-phospho-beta-D-ribosyl)imidazole-4-carboxamide) to produce the intermediate formyl-AICAR (FAICAR). Also catalyzes the cyclization of FAICAR to IMP. The sequence is that of Bifunctional purine biosynthesis protein ADE16 from Cryptococcus neoformans var. grubii serotype A (strain H99 / ATCC 208821 / CBS 10515 / FGSC 9487) (Filobasidiella neoformans var. grubii).